A 156-amino-acid chain; its full sequence is FAD synthase (156 aa).

ATP is bound by residues 16–17 (TF), 21–24 (HPGH), D101, and Y129.

It belongs to the archaeal FAD synthase family. As to quaternary structure, homodimer. A divalent metal cation serves as cofactor.

It catalyses the reaction FMN + ATP + H(+) = FAD + diphosphate. Its pathway is cofactor biosynthesis; FAD biosynthesis; FAD from FMN: step 1/1. In terms of biological role, catalyzes the transfer of the AMP portion of ATP to flavin mononucleotide (FMN) to produce flavin adenine dinucleotide (FAD) coenzyme. In Methanococcus aeolicus (strain ATCC BAA-1280 / DSM 17508 / OCM 812 / Nankai-3), this protein is FAD synthase.